Consider the following 172-residue polypeptide: Adenylate kinase isoenzyme 6 (172 aa).

ATP-binding residues include G13, G15, K16, T17, and T18. The interval 33-56 (NVGDLAREGQLYDGYDEEYDCPIL) is NMPbind. An LID region spans residues 108 to 118 (NRGYNEKKLKD). The ATP site is built by R109 and K148.

The protein belongs to the adenylate kinase family. AK6 subfamily. Monomer and homodimer. Interacts with small ribosomal subunit protein uS11. Not a structural component of 43S pre-ribosomes, but transiently interacts with them by binding to uS11. Interacts with COIL (via C-terminus).

The protein resides in the cytoplasm. It is found in the nucleus. It localises to the nucleoplasm. Its subcellular location is the cajal body. It carries out the reaction AMP + ATP = 2 ADP. It catalyses the reaction ATP + H2O = ADP + phosphate + H(+). Functionally, broad-specificity nucleoside monophosphate (NMP) kinase that catalyzes the reversible transfer of the terminal phosphate group between nucleoside triphosphates and monophosphates. Also has ATPase activity. Involved in the late cytoplasmic maturation steps of the 40S ribosomal particles, specifically 18S rRNA maturation. While NMP activity is not required for ribosome maturation, ATPase activity is. Associates transiently with small ribosomal subunit protein uS11. ATP hydrolysis breaks the interaction with uS11. May temporarily remove uS11 from the ribosome to enable a conformational change of the ribosomal RNA that is needed for the final maturation step of the small ribosomal subunit. Its NMP activity may have a role in nuclear energy homeostasis. May be involved in regulation of Cajal body (CB) formation. This chain is Adenylate kinase isoenzyme 6, found in Bos taurus (Bovine).